We begin with the raw amino-acid sequence, 918 residues long: DNA repair and recombination protein RAD54B (918 aa).

Over residues 1–11 (MRRSAAPSQVL) the composition is skewed to polar residues. The tract at residues 1–29 (MRRSAAPSQVLGNVAKKPRFIPPGKSNAL) is disordered. Residues 320-487 (GMRVSGRFGA…YALIEFVNPG (168 aa)) form the Helicase ATP-binding domain. 333–340 (DEMGLGKT) is a binding site for ATP. A DEGH box motif is present at residues 438-441 (DEGH). In terms of domain architecture, Helicase C-terminal spans 653 to 817 (VLVKLLAAIR…HIHFSVEELR (165 aa)). Positions 842 to 873 (KDHQNPSSKKPSVSRCCQLRQDQGKHNSKKPL) are disordered.

It belongs to the SNF2/RAD54 helicase family.

It is found in the nucleus. Its function is as follows. Involved in DNA repair and mitotic recombination. The polypeptide is DNA repair and recombination protein RAD54B (RAD54B) (Gallus gallus (Chicken)).